The primary structure comprises 87 residues: Small ribosomal subunit protein uS15 (87 aa).

Residues 1–19 show a composition bias toward basic and acidic residues; that stretch reads MDKAKKQELMAKHARHEGD. Residues 1 to 23 are disordered; it reads MDKAKKQELMAKHARHEGDTGSP.

The protein belongs to the universal ribosomal protein uS15 family. Part of the 30S ribosomal subunit. Forms a bridge to the 50S subunit in the 70S ribosome, contacting the 23S rRNA.

Its function is as follows. One of the primary rRNA binding proteins, it binds directly to 16S rRNA where it helps nucleate assembly of the platform of the 30S subunit by binding and bridging several RNA helices of the 16S rRNA. In terms of biological role, forms an intersubunit bridge (bridge B4) with the 23S rRNA of the 50S subunit in the ribosome. This is Small ribosomal subunit protein uS15 from Clostridium botulinum (strain Loch Maree / Type A3).